Consider the following 239-residue polypeptide: Mitochondrial fission factor homolog B (239 aa).

Residues 1-219 (MAEINRMQYE…ENKERVKHEM (219 aa)) lie on the Cytoplasmic side of the membrane. Positions 107 to 139 (EGPAPATPHSKEVRSSGHLKRDGLASENSLRQN) are disordered. Over residues 115 to 130 (HSKEVRSSGHLKRDGL) the composition is skewed to basic and acidic residues. Positions 184-214 (DLALADAASLRRQIIKLNRRLLLLEEENKER) form a coiled coil. A helical; Anchor for type IV membrane protein membrane pass occupies residues 220-237 (TMYSIIIIFGLLNSWLWF). Residues 238–239 (RR) lie on the Extracellular side of the membrane.

Belongs to the Tango11 family.

Its subcellular location is the mitochondrion outer membrane. It localises to the peroxisome. Its function is as follows. Plays a role in mitochondrial and peroxisomal fission. Promotes the recruitment and association of the fission mediator dynamin-related protein 1 (DNM1L) to the mitochondrial surface. The polypeptide is Mitochondrial fission factor homolog B (mff-b) (Xenopus laevis (African clawed frog)).